A 309-amino-acid polypeptide reads, in one-letter code: Putative HTH-type transcriptional regulatory protein AF_1787 (309 aa).

Positions isoleucine 131–isoleucine 185 constitute an HTH cro/C1-type domain. Residues valine 142–glutamate 161 constitute a DNA-binding region (H-T-H motif).

In Archaeoglobus fulgidus (strain ATCC 49558 / DSM 4304 / JCM 9628 / NBRC 100126 / VC-16), this protein is Putative HTH-type transcriptional regulatory protein AF_1787.